The primary structure comprises 634 residues: tRNA uridine 5-carboxymethylaminomethyl modification enzyme MnmG (634 aa).

14–19 (GGGHAG) contributes to the FAD binding site. Residue 279–293 (GPRYCPSIEDKVVRF) coordinates NAD(+).

Belongs to the MnmG family. Homodimer. Heterotetramer of two MnmE and two MnmG subunits. FAD serves as cofactor.

It localises to the cytoplasm. Functionally, NAD-binding protein involved in the addition of a carboxymethylaminomethyl (cmnm) group at the wobble position (U34) of certain tRNAs, forming tRNA-cmnm(5)s(2)U34. The sequence is that of tRNA uridine 5-carboxymethylaminomethyl modification enzyme MnmG from Xanthomonas oryzae pv. oryzae (strain KACC10331 / KXO85).